A 278-amino-acid chain; its full sequence is Indole-3-glycerol phosphate synthase (278 aa).

This sequence belongs to the TrpC family.

The catalysed reaction is 1-(2-carboxyphenylamino)-1-deoxy-D-ribulose 5-phosphate + H(+) = (1S,2R)-1-C-(indol-3-yl)glycerol 3-phosphate + CO2 + H2O. It participates in amino-acid biosynthesis; L-tryptophan biosynthesis; L-tryptophan from chorismate: step 4/5. The polypeptide is Indole-3-glycerol phosphate synthase (Pseudomonas paraeruginosa (strain DSM 24068 / PA7) (Pseudomonas aeruginosa (strain PA7))).